Reading from the N-terminus, the 1311-residue chain is DENN domain-containing protein 5B (1311 aa).

A uDENN domain is found at 53-270; it reads ATAAGENFDQ…EVPLPASGRS (218 aa). Residues 154 to 165 show a composition bias toward polar residues; sequence QAEHNTSAQNCT. A disordered region spans residues 154–201; sequence QAEHNTSAQNCTSSSSSSSSSSSSSSMDSLSSSLDDVDSPSAHGGRRT. Residues 166–187 are compositionally biased toward low complexity; sequence SSSSSSSSSSSSSSMDSLSSSL. Positions 289–452 constitute a cDENN domain; sequence ELPLADFPLA…AVMSLQTSVL (164 aa). The region spanning 454–619 is the dDENN domain; it reads KELKSTSLRE…DNKIMSQWEE (166 aa). Residues 809-969 form the RUN 1 domain; that stretch reads LEENTLIASL…DYFCFTSVFT (161 aa). Positions 854–874 are disordered; that stretch reads EQQLESPVSNGQERRKTESSV. The helical transmembrane segment at 962–982 threads the bilayer; that stretch reads FCFTSVFTTIMIPYRAVIIPI. The PLAT domain maps to 973–1081; that stretch reads IPYRAVIIPI…DDGSLERVLI (109 aa). The 152-residue stretch at 1155-1306 folds into the RUN 2 domain; the sequence is TVLLCGEGGL…FPITLETSLT (152 aa).

It belongs to the RAB6IP1 family.

It localises to the membrane. Guanine nucleotide exchange factor (GEF) which may activate the small GTPases Rab. May promote the exchange of GDP to GTP, converting inactive GDP-bound Rab proteins into their active GTP-bound form. This Danio rerio (Zebrafish) protein is DENN domain-containing protein 5B (dennd5b).